Reading from the N-terminus, the 340-residue chain is Serpentine receptor class alpha-18 (340 aa).

6 helical membrane passes run 29-49 (FNFI…WLAI), 109-129 (VFEL…VFSL), 149-169 (FIAT…FYIV), 198-218 (VRTG…YVCV), 249-269 (ISIV…NLLI), and 285-305 (IVSF…VIYF).

The protein belongs to the nematode receptor-like protein sra family.

It localises to the membrane. This chain is Serpentine receptor class alpha-18 (sra-18), found in Caenorhabditis elegans.